A 546-amino-acid polypeptide reads, in one-letter code: uncharacterized protein (546 aa).

Transmembrane regions (helical) follow at residues 4–23, 30–47, 57–79, 91–113, and 155–177; these read ILLENPLLVLFLVAAIGYPL, GSSLGVAAVLFVGLAMGS, IVYVLGLALFVYTIGLSSGPAFV, ALIIGMLLVAAGLVVGAQRLLGF, and PVVGYSVAYPMGVMGVVLAISLV. 2 RCK C-terminal domains span residues 189–274 and 275–359; these read GKRL…FLGE and VSEE…FFGD. The next 6 helical transmembrane spans lie at 372–394, 399–421, 434–456, 460–482, 489–511, and 521–543; these read FSLGLALGLLLGIIPIPLPGGIT, FAGGPLIVALILGTIGRSGSMVW, IGLVLFLAGVGTRAGYGFVTTLA, GLAIFAAGAVVTCLTALATLWIG, PMSILIGMVAGLQTQPAVLGYAL, and IGYASVYPVATISKILIVQILLT.

It belongs to the AAE transporter (TC 2.A.81) family.

Its subcellular location is the cell membrane. This is an uncharacterized protein from Geobacter sulfurreducens (strain ATCC 51573 / DSM 12127 / PCA).